Here is a 116-residue protein sequence, read N- to C-terminus: MNDLITLAQAHCQPREKKEHKLGQARLAELLPQVPGWELSNNGHALTRTFRFDNYYRTLAFVNALAFIAHCEDHHPDMSVHYGRAVVCFSTHKIGGISENDFICAAKTSALYEQGI.

It belongs to the pterin-4-alpha-carbinolamine dehydratase family.

It carries out the reaction (4aS,6R)-4a-hydroxy-L-erythro-5,6,7,8-tetrahydrobiopterin = (6R)-L-erythro-6,7-dihydrobiopterin + H2O. This Xylella fastidiosa (strain 9a5c) protein is Putative pterin-4-alpha-carbinolamine dehydratase.